The sequence spans 213 residues: Glycerol-3-phosphate acyltransferase (213 aa).

6 helical membrane-spanning segments follow: residues 2–22 (ITIV…GLWI), 54–74 (MATF…PIMF), 80–100 (SPLI…FAGF), 110–130 (AGVV…VFFG), 143–163 (VTAS…GFIL), and 165–185 (NYDP…IIRH).

The protein belongs to the PlsY family. Probably interacts with PlsX.

It is found in the cell membrane. It catalyses the reaction an acyl phosphate + sn-glycerol 3-phosphate = a 1-acyl-sn-glycero-3-phosphate + phosphate. It functions in the pathway lipid metabolism; phospholipid metabolism. Its function is as follows. Catalyzes the transfer of an acyl group from acyl-phosphate (acyl-PO(4)) to glycerol-3-phosphate (G3P) to form lysophosphatidic acid (LPA). This enzyme utilizes acyl-phosphate as fatty acyl donor, but not acyl-CoA or acyl-ACP. The chain is Glycerol-3-phosphate acyltransferase from Streptococcus pneumoniae (strain Taiwan19F-14).